A 361-amino-acid polypeptide reads, in one-letter code: Phosphoserine aminotransferase (361 aa).

Arg-42 is an L-glutamate binding site. Pyridoxal 5'-phosphate contacts are provided by residues 76–77 (AR), Trp-102, Thr-153, Asp-173, and Gln-196. Lys-197 carries the N6-(pyridoxal phosphate)lysine modification. 238–239 (NT) contacts pyridoxal 5'-phosphate.

It belongs to the class-V pyridoxal-phosphate-dependent aminotransferase family. SerC subfamily. In terms of assembly, homodimer. Pyridoxal 5'-phosphate is required as a cofactor.

The protein resides in the cytoplasm. The enzyme catalyses O-phospho-L-serine + 2-oxoglutarate = 3-phosphooxypyruvate + L-glutamate. It carries out the reaction 4-(phosphooxy)-L-threonine + 2-oxoglutarate = (R)-3-hydroxy-2-oxo-4-phosphooxybutanoate + L-glutamate. It participates in amino-acid biosynthesis; L-serine biosynthesis; L-serine from 3-phospho-D-glycerate: step 2/3. It functions in the pathway cofactor biosynthesis; pyridoxine 5'-phosphate biosynthesis; pyridoxine 5'-phosphate from D-erythrose 4-phosphate: step 3/5. Functionally, catalyzes the reversible conversion of 3-phosphohydroxypyruvate to phosphoserine and of 3-hydroxy-2-oxo-4-phosphonooxybutanoate to phosphohydroxythreonine. This is Phosphoserine aminotransferase from Buchnera aphidicola subsp. Acyrthosiphon pisum (strain 5A).